We begin with the raw amino-acid sequence, 383 residues long: Thioredoxin reductase 2 (383 aa).

FAD-binding positions include serine 66 to alanine 69, phenylalanine 87 to glutamate 88, isoleucine 95 to glutamine 100, asparagine 109, valine 142, cysteine 200, aspartate 345, and arginine 352 to alanine 354. An intrachain disulfide couples cysteine 197 to cysteine 200.

This sequence belongs to the class-II pyridine nucleotide-disulfide oxidoreductase family. In terms of assembly, homodimer. The cofactor is FAD.

It is found in the cytoplasm. The protein resides in the mitochondrion matrix. It catalyses the reaction [thioredoxin]-dithiol + NADP(+) = [thioredoxin]-disulfide + NADPH + H(+). Its function is as follows. Possesses thioredoxin-disulfide reductase activity towards thioredoxins O1, O2 and F3. This Arabidopsis thaliana (Mouse-ear cress) protein is Thioredoxin reductase 2 (NTR2).